The following is a 226-amino-acid chain: MGIRAIVVDTAGTTTDLNFIQDVLFPYSVKALPDFLEQNQHNVLVENCICDTRDIALEPDADLARVTEILQQWVSEDRKATPLKTLQGLIWKQGYAHGEFKGHIFPDFIEAVKRFSAQNLRIYSFSSGSVDAQKLLFSHSDGGDLTEMFNGHFDTRTGNKLDKQAYCNILNTISLSPKQVLFVSDVIEELKAAEAAGMMTCQMVRDSTLRTGEFRKISSFDELLIE.

It belongs to the HAD-like hydrolase superfamily. MasA/MtnC family. In terms of assembly, monomer. Requires Mg(2+) as cofactor.

It carries out the reaction 5-methylsulfanyl-2,3-dioxopentyl phosphate + H2O = 1,2-dihydroxy-5-(methylsulfanyl)pent-1-en-3-one + phosphate. It participates in amino-acid biosynthesis; L-methionine biosynthesis via salvage pathway; L-methionine from S-methyl-5-thio-alpha-D-ribose 1-phosphate: step 3/6. The protein operates within amino-acid biosynthesis; L-methionine biosynthesis via salvage pathway; L-methionine from S-methyl-5-thio-alpha-D-ribose 1-phosphate: step 4/6. In terms of biological role, bifunctional enzyme that catalyzes the enolization of 2,3-diketo-5-methylthiopentyl-1-phosphate (DK-MTP-1-P) into the intermediate 2-hydroxy-3-keto-5-methylthiopentenyl-1-phosphate (HK-MTPenyl-1-P), which is then dephosphorylated to form the acireductone 1,2-dihydroxy-3-keto-5-methylthiopentene (DHK-MTPene). The sequence is that of Enolase-phosphatase E1 from Shewanella baltica (strain OS155 / ATCC BAA-1091).